The sequence spans 892 residues: Translation initiation factor IF-2 (892 aa).

Basic and acidic residues-rich tracts occupy residues 93-159 (VKRD…KDKV) and 166-216 (DMTK…EENK). The interval 93–304 (VKRDPQEAER…SSLQQGFQKP (212 aa)) is disordered. Basic residues predominate over residues 254 to 269 (GRGRNAKAARPAKKGK). Residues 270–282 (HAESKADREEARA) show a composition bias toward basic and acidic residues. The tr-type G domain maps to 391 to 560 (PRAPVVTIMG…LLQAEVLELK (170 aa)). The interval 400–407 (GHVDHGKT) is G1. 400-407 (GHVDHGKT) is a binding site for GTP. A G2 region spans residues 425–429 (GITQH). The segment at 446–449 (DTPG) is G3. Residues 446-450 (DTPGH) and 500-503 (NKID) contribute to the GTP site. The tract at residues 500–503 (NKID) is G4. The interval 536–538 (SAK) is G5.

Belongs to the TRAFAC class translation factor GTPase superfamily. Classic translation factor GTPase family. IF-2 subfamily.

The protein resides in the cytoplasm. One of the essential components for the initiation of protein synthesis. Protects formylmethionyl-tRNA from spontaneous hydrolysis and promotes its binding to the 30S ribosomal subunits. Also involved in the hydrolysis of GTP during the formation of the 70S ribosomal complex. The polypeptide is Translation initiation factor IF-2 (Salmonella gallinarum (strain 287/91 / NCTC 13346)).